The following is a 478-amino-acid chain: Dihydrolipoyl dehydrogenase (478 aa).

Residues 34–49 (EKYI…GGTC), Lys58, and Gly122 each bind FAD. Cys49 and Cys54 form a disulfide bridge. NAD(+) contacts are provided by residues 188-192 (GAGVI), Glu211, Val245, and 276-279 (AVGR). The FAD site is built by Asp319 and Ala327. Residue His451 is the Proton acceptor of the active site.

The protein belongs to the class-I pyridine nucleotide-disulfide oxidoreductase family. As to quaternary structure, homodimer. FAD is required as a cofactor.

It is found in the cytoplasm. The enzyme catalyses N(6)-[(R)-dihydrolipoyl]-L-lysyl-[protein] + NAD(+) = N(6)-[(R)-lipoyl]-L-lysyl-[protein] + NADH + H(+). In terms of biological role, the branched-chain alpha-keto dehydrogenase complex catalyzes the overall conversion of alpha-keto acids to acyl-CoA and CO(2). It contains multiple copies of 3 enzymatic components: branched-chain alpha-keto acid decarboxylase (E1), lipoamide acyltransferase (E2) and lipoamide dehydrogenase (E3). The polypeptide is Dihydrolipoyl dehydrogenase (lpd) (Pseudomonas fluorescens).